The primary structure comprises 257 residues: Transmembrane protein C257L (257 aa).

2 helical membrane passes run 123–143 (LELLGYSPTSLIGGDLMFTAL) and 163–183 (MMIFFLIILLCIILGIFYVLV).

The protein belongs to the asfivirus C257R family.

Its subcellular location is the host membrane. The protein resides in the virion. The sequence is that of Transmembrane protein C257L from Ornithodoros (relapsing fever ticks).